A 250-amino-acid polypeptide reads, in one-letter code: Ubiquinone/menaquinone biosynthesis C-methyltransferase UbiE (250 aa).

S-adenosyl-L-methionine-binding positions include serine 73, aspartate 94, and 122-123; that span reads NA.

Belongs to the class I-like SAM-binding methyltransferase superfamily. MenG/UbiE family.

It catalyses the reaction a 2-demethylmenaquinol + S-adenosyl-L-methionine = a menaquinol + S-adenosyl-L-homocysteine + H(+). It carries out the reaction a 2-methoxy-6-(all-trans-polyprenyl)benzene-1,4-diol + S-adenosyl-L-methionine = a 5-methoxy-2-methyl-3-(all-trans-polyprenyl)benzene-1,4-diol + S-adenosyl-L-homocysteine + H(+). It functions in the pathway quinol/quinone metabolism; menaquinone biosynthesis; menaquinol from 1,4-dihydroxy-2-naphthoate: step 2/2. Its pathway is cofactor biosynthesis; ubiquinone biosynthesis. In terms of biological role, methyltransferase required for the conversion of demethylmenaquinol (DMKH2) to menaquinol (MKH2) and the conversion of 2-polyprenyl-6-methoxy-1,4-benzoquinol (DDMQH2) to 2-polyprenyl-3-methyl-6-methoxy-1,4-benzoquinol (DMQH2). In Legionella pneumophila (strain Lens), this protein is Ubiquinone/menaquinone biosynthesis C-methyltransferase UbiE.